The sequence spans 237 residues: MPESLMNIRVDRKAFAGNTVLQDIDLSLQSGEIVSLLGPSGCGKSTLLRIVAGLEQDFRGSVDNIEGEVAFVFQEPRLMPWLTVEQNIGFSDDAGYDRRWVGQLIEEVGLSGFADALPKALSGGMAQRVAIARGLYSHPTVLLLDEPFSAVDAFTRMKLQDLLLQLAERHAITLLLVTHDVDEALYLSDRVLVMGSRPGTITQQLPVGLQAPRDRRDPLLARLKAQALTELHQAHII.

The 217-residue stretch at 5–221 folds into the ABC transporter domain; it reads LMNIRVDRKA…PRDRRDPLLA (217 aa). ATP is bound at residue 38-45; sequence GPSGCGKS.

The protein belongs to the ABC transporter superfamily. Aliphatic sulfonates importer (TC 3.A.1.17.2) family. In terms of assembly, the complex is composed of two ATP-binding proteins (SsuB), two transmembrane proteins (SsuC) and a solute-binding protein (SsuA).

Its subcellular location is the cell inner membrane. It carries out the reaction ATP + H2O + aliphatic sulfonate-[sulfonate-binding protein]Side 1 = ADP + phosphate + aliphatic sulfonateSide 2 + [sulfonate-binding protein]Side 1.. Part of the ABC transporter complex SsuABC involved in aliphatic sulfonates import. Responsible for energy coupling to the transport system. In Pseudomonas savastanoi pv. phaseolicola (strain 1448A / Race 6) (Pseudomonas syringae pv. phaseolicola (strain 1448A / Race 6)), this protein is Aliphatic sulfonates import ATP-binding protein SsuB 1.